Here is a 172-residue protein sequence, read N- to C-terminus: Shikimate kinase (172 aa).

14-19 (GAGKST) contacts ATP. Mg(2+) is bound at residue Ser-18. The substrate site is built by Asp-36, Arg-60, and Gly-82. Arg-120 lines the ATP pocket. Arg-139 is a binding site for substrate. Gln-156 is an ATP binding site.

The protein belongs to the shikimate kinase family. As to quaternary structure, monomer. Mg(2+) serves as cofactor.

The protein resides in the cytoplasm. The catalysed reaction is shikimate + ATP = 3-phosphoshikimate + ADP + H(+). Its pathway is metabolic intermediate biosynthesis; chorismate biosynthesis; chorismate from D-erythrose 4-phosphate and phosphoenolpyruvate: step 5/7. Its function is as follows. Catalyzes the specific phosphorylation of the 3-hydroxyl group of shikimic acid using ATP as a cosubstrate. This Vibrio vulnificus (strain CMCP6) protein is Shikimate kinase.